A 390-amino-acid chain; its full sequence is Bibenzyl synthase (390 aa).

The active site involves Cys164.

Belongs to the thiolase-like superfamily. Chalcone/stilbene synthases family.

It catalyses the reaction 3-(3-hydroxyphenyl)-propanoyl-CoA + 3 malonyl-CoA + 3 H(+) = 3,3',5-trihydroxybibenzyl + 4 CO2 + 4 CoA. This Phalaenopsis sp. (Moth orchid) protein is Bibenzyl synthase (BIBSY212).